Reading from the N-terminus, the 469-residue chain is MNPNQKIITIGSICMVIGIVSLMLQIGNIISIWVSHSIQTGNQHQAEPCNQSIITYENNTWVNQTYVNISNTNFLTEKAVASVTLAGNSSLCPISGWAVYSKDNGIRIGSKGDVFVIREPFISCSHLECRTFFLTQGALLNDKHSNGTVKDRSPYRTLMSCPVGEAPSPYNSRFESVAWSASACHDGTSWLTIGISGPDNGAVAVLKYNGIITDTIKSWRNNILRTQESECACVNGSCFTVMTDGPSNGQASYKIFKIEKGKVVKSVELNAPNYHYEECSCYPDAGEITCVCRDNWHGSNRPWVSFNQNLEYQIGYICSGVFGDNPRPNDGTGSCGPVSPNGAYGIKGFSFKYGNGVWIGRTKSTNSRSGFEMIWDPNGWTGTDSNFSVKQDIVAITDWSGYSGSFVQHPELTGLDCIRPCFWVELIRGRPKESTIWTSGSSISFCGVNSDTVGWSWPDGAELPFTIDK.

Over 1-6 (MNPNQK) the chain is Intravirion. The chain crosses the membrane as a helical span at residues 7-27 (IITIGSICMVIGIVSLMLQIG). The involved in apical transport and lipid raft association stretch occupies residues 11-33 (GSICMVIGIVSLMLQIGNIISIW). Topologically, residues 28–469 (NIISIWVSHS…GAELPFTIDK (442 aa)) are virion surface. The hypervariable stalk region stretch occupies residues 36-90 (HSIQTGNQHQAEPCNQSIITYENNTWVNQTYVNISNTNFLTEKAVASVTLAGNSS). N-linked (GlcNAc...) asparagine; by host glycosylation is found at Asn-50, Asn-58, Asn-63, Asn-68, and Asn-88. Positions 91 to 469 (LCPISGWAVY…GAELPFTIDK (379 aa)) are head of neuraminidase. 8 cysteine pairs are disulfide-bonded: Cys-92-Cys-417, Cys-124-Cys-129, Cys-184-Cys-231, Cys-233-Cys-238, Cys-279-Cys-292, Cys-281-Cys-290, Cys-318-Cys-335, and Cys-421-Cys-446. Arg-118 is a binding site for substrate. Asn-146 carries an N-linked (GlcNAc...) asparagine; by host glycan. Asp-151 functions as the Proton donor/acceptor in the catalytic mechanism. Arg-152 is a binding site for substrate. The N-linked (GlcNAc...) asparagine; by host glycan is linked to Asn-235. 277 to 278 (EE) is a binding site for substrate. Arg-293 serves as a coordination point for substrate. Ca(2+) contacts are provided by Asp-294, Gly-298, and Asp-324. Arg-368 lines the substrate pocket. N-linked (GlcNAc...) asparagine; by host glycosylation occurs at Asn-386. Catalysis depends on Tyr-402, which acts as the Nucleophile.

This sequence belongs to the glycosyl hydrolase 34 family. In terms of assembly, homotetramer. Ca(2+) serves as cofactor. N-glycosylated.

The protein localises to the virion membrane. It is found in the host apical cell membrane. It carries out the reaction Hydrolysis of alpha-(2-&gt;3)-, alpha-(2-&gt;6)-, alpha-(2-&gt;8)- glycosidic linkages of terminal sialic acid residues in oligosaccharides, glycoproteins, glycolipids, colominic acid and synthetic substrates.. Its activity is regulated as follows. Inhibited by the neuraminidase inhibitors zanamivir (Relenza) and oseltamivir (Tamiflu). These drugs interfere with the release of progeny virus from infected cells and are effective against all influenza strains. Resistance to neuraminidase inhibitors is quite rare. Catalyzes the removal of terminal sialic acid residues from viral and cellular glycoconjugates. Cleaves off the terminal sialic acids on the glycosylated HA during virus budding to facilitate virus release. Additionally helps virus spread through the circulation by further removing sialic acids from the cell surface. These cleavages prevent self-aggregation and ensure the efficient spread of the progeny virus from cell to cell. Otherwise, infection would be limited to one round of replication. Described as a receptor-destroying enzyme because it cleaves a terminal sialic acid from the cellular receptors. May facilitate viral invasion of the upper airways by cleaving the sialic acid moieties on the mucin of the airway epithelial cells. Likely to plays a role in the budding process through its association with lipid rafts during intracellular transport. May additionally display a raft-association independent effect on budding. Plays a role in the determination of host range restriction on replication and virulence. Sialidase activity in late endosome/lysosome traffic seems to enhance virus replication. The chain is Neuraminidase from Aves (Cat).